The primary structure comprises 241 residues: 1-(5-phosphoribosyl)-5-[(5-phosphoribosylamino)methylideneamino] imidazole-4-carboxamide isomerase (241 aa).

D8 serves as the catalytic Proton acceptor. The Proton donor role is filled by D130.

The protein belongs to the HisA/HisF family.

It localises to the cytoplasm. It catalyses the reaction 1-(5-phospho-beta-D-ribosyl)-5-[(5-phospho-beta-D-ribosylamino)methylideneamino]imidazole-4-carboxamide = 5-[(5-phospho-1-deoxy-D-ribulos-1-ylimino)methylamino]-1-(5-phospho-beta-D-ribosyl)imidazole-4-carboxamide. Its pathway is amino-acid biosynthesis; L-histidine biosynthesis; L-histidine from 5-phospho-alpha-D-ribose 1-diphosphate: step 4/9. This chain is 1-(5-phosphoribosyl)-5-[(5-phosphoribosylamino)methylideneamino] imidazole-4-carboxamide isomerase, found in Leptospira interrogans serogroup Icterohaemorrhagiae serovar copenhageni (strain Fiocruz L1-130).